Consider the following 96-residue polypeptide: MEQAPGDQGPQREPYNEWALEILEELKNEAVRHFPRPWLHGLGQHIYNTYGDTWEGVEAIIRILQQLLFIHFRIGCRHSRIGIVPQRRVRNGASRS.

The homooligomerization stretch occupies residues 1–42; it reads MEQAPGDQGPQREPYNEWALEILEELKNEAVRHFPRPWLHGL. Phosphoserine; by host is present on residues serine 79, serine 94, and serine 96.

It belongs to the HIV-1 VPR protein family. Homooligomer, may form homodimer. Interacts with p6-gag region of the Pr55 Gag precursor protein through a (Leu-X-X)4 motif near the C-terminus of the P6gag protein. Interacts with host UNG. May interact with host RAD23A/HHR23A. Interacts with host VPRBP/DCAF1, leading to hijack the CUL4A-RBX1-DDB1-DCAF1/VPRBP complex, mediating ubiquitination of host proteins such as TERT and ZGPAT and arrest of the cell cycle in G2 phase. Phosphorylated on several residues by host. These phosphorylations regulate VPR activity for the nuclear import of the HIV-1 pre-integration complex.

It localises to the virion. Its subcellular location is the host nucleus. It is found in the host extracellular space. During virus replication, may deplete host UNG protein, and incude G2-M cell cycle arrest. Acts by targeting specific host proteins for degradation by the 26S proteasome, through association with the cellular CUL4A-DDB1 E3 ligase complex by direct interaction with host VPRPB/DCAF-1. Cell cycle arrest reportedly occurs within hours of infection and is not blocked by antiviral agents, suggesting that it is initiated by the VPR carried into the virion. Additionally, VPR induces apoptosis in a cell cycle dependent manner suggesting that these two effects are mechanistically linked. Detected in the serum and cerebrospinal fluid of AIDS patient, VPR may also induce cell death to bystander cells. In terms of biological role, during virus entry, plays a role in the transport of the viral pre-integration (PIC) complex to the host nucleus. This function is crucial for viral infection of non-dividing macrophages. May act directly at the nuclear pore complex, by binding nucleoporins phenylalanine-glycine (FG)-repeat regions. The chain is Protein Vpr from Human immunodeficiency virus type 1 group M subtype F1 (isolate VI850) (HIV-1).